Consider the following 393-residue polypeptide: PxcA-like protein (393 aa).

4 helical membrane-spanning segments follow: residues 173 to 193, 271 to 291, 306 to 326, and 354 to 374; these read FLIVLIFIPLTVQILTKNLVF, IVNLLADIAGLVAFVVLIIVF, FLALNDITKVFIFILLTDMFV, and VYIFIATVPVFLDSLFKLLIF.

The protein belongs to the CemA family. PxcL subfamily.

It localises to the cell inner membrane. In terms of biological role, together with PxcA, contributes to transient H(+) uptake following dark to light transition. Required for H(+) influx to activate the Calvin-Benson-Bassham cycle. May also be involved in CO(2) transport. The protein is PxcA-like protein of Synechocystis sp. (strain ATCC 27184 / PCC 6803 / Kazusa).